The primary structure comprises 203 residues: Endo-type membrane-bound lytic murein transglycosylase A (203 aa).

A signal peptide spans 1-15 (MKLRWLMWLVVFLAG). Cys-16 is lipidated: N-palmitoyl cysteine. The S-diacylglycerol cysteine moiety is linked to residue Cys-16.

The protein belongs to the transglycosylase Slt family.

Its subcellular location is the cell outer membrane. It catalyses the reaction Endolytic cleavage of the (1-&gt;4)-beta-glycosidic linkage between N-acetylmuramic acid (MurNAc) and N-acetylglucosamine (GlcNAc) residues in peptidoglycan with concomitant formation of a 1,6-anhydrobond in the MurNAc residue.. In terms of biological role, murein-degrading enzyme. May play a role in recycling of muropeptides during cell elongation and/or cell division. Preferentially cleaves at a distance of more than two disaccharide units from the ends of the glycan chain. This Cronobacter sakazakii (strain ATCC BAA-894) (Enterobacter sakazakii) protein is Endo-type membrane-bound lytic murein transglycosylase A.